The sequence spans 40 residues: Submaxillary gland androgen-regulated protein 2, isoform epsilon (40 aa).

The first 20 residues, 1-20 (MKALYMVFVLWVLIGCFLRC), serve as a signal peptide directing secretion.

Its subcellular location is the secreted. May play a role in protection or detoxification. The protein is Submaxillary gland androgen-regulated protein 2, isoform epsilon (Smr2) of Mus musculus (Mouse).